The primary structure comprises 273 residues: F-actin-capping protein subunit alpha (273 aa).

Belongs to the F-actin-capping protein alpha subunit family. In terms of assembly, heterodimer of an alpha and a beta subunit.

It is found in the cytoplasm. The protein localises to the cytoskeleton. Its function is as follows. F-actin-capping proteins bind in a Ca(2+)-independent manner to the fast growing ends of actin filaments (barbed end) thereby blocking the exchange of subunits at these ends. Unlike other capping proteins (such as gelsolin and severin), these proteins do not sever actin filaments. The protein is F-actin-capping protein subunit alpha (CAP1) of Gibberella zeae (strain ATCC MYA-4620 / CBS 123657 / FGSC 9075 / NRRL 31084 / PH-1) (Wheat head blight fungus).